A 242-amino-acid polypeptide reads, in one-letter code: Ribonuclease 3 (242 aa).

Positions 18–146 (APAIEAKLGY…IIGAIYLDGG (129 aa)) constitute an RNase III domain. E59 serves as a coordination point for Mg(2+). Residue D63 is part of the active site. Residues D132 and E135 each coordinate Mg(2+). E135 is an active-site residue. A DRBM domain is found at 172–241 (NWKALLQDYC…AADALSRVEL (70 aa)). Over residues 218 to 227 (RGKGTSKKEA) the composition is skewed to basic and acidic residues. The segment at 218-242 (RGKGTSKKEAQQAAAADALSRVELP) is disordered.

It belongs to the ribonuclease III family. In terms of assembly, homodimer. It depends on Mg(2+) as a cofactor.

Its subcellular location is the cytoplasm. The enzyme catalyses Endonucleolytic cleavage to 5'-phosphomonoester.. In terms of biological role, digests double-stranded RNA. Involved in the processing of primary rRNA transcript to yield the immediate precursors to the large and small rRNAs (23S and 16S). Processes some mRNAs, and tRNAs when they are encoded in the rRNA operon. Processes pre-crRNA and tracrRNA of type II CRISPR loci if present in the organism. The sequence is that of Ribonuclease 3 from Protochlamydia amoebophila (strain UWE25).